The following is a 161-amino-acid chain: Endoribonuclease YbeY (161 aa).

Zn(2+) is bound by residues histidine 127, histidine 131, and histidine 137.

This sequence belongs to the endoribonuclease YbeY family. The cofactor is Zn(2+).

The protein localises to the cytoplasm. In terms of biological role, single strand-specific metallo-endoribonuclease involved in late-stage 70S ribosome quality control and in maturation of the 3' terminus of the 16S rRNA. This is Endoribonuclease YbeY from Listeria monocytogenes serotype 4a (strain HCC23).